Here is a 1232-residue protein sequence, read N- to C-terminus: DNA-directed RNA polymerase subunit beta (1232 aa).

The segment at 1170–1232 is disordered; the sequence is SVDEDADELE…LDLDDFGDEH (63 aa). Residues 1171-1180 are compositionally biased toward acidic residues; sequence VDEDADELEV. The span at 1189–1198 shows a compositional bias: basic and acidic residues; it reads PEEKEEKEKE. A compositionally biased stretch (acidic residues) spans 1199 to 1232; it reads DSDEYDDLREEDVEPDLEELSLDDLDLDDFGDEH.

The protein belongs to the RNA polymerase beta chain family. The RNAP catalytic core consists of 2 alpha, 1 beta, 1 beta' and 1 omega subunit. When a sigma factor is associated with the core the holoenzyme is formed, which can initiate transcription.

It catalyses the reaction RNA(n) + a ribonucleoside 5'-triphosphate = RNA(n+1) + diphosphate. DNA-dependent RNA polymerase catalyzes the transcription of DNA into RNA using the four ribonucleoside triphosphates as substrates. This Clostridium botulinum (strain Kyoto / Type A2) protein is DNA-directed RNA polymerase subunit beta.